Here is a 964-residue protein sequence, read N- to C-terminus: Glycine dehydrogenase (decarboxylating) (964 aa).

K710 carries the N6-(pyridoxal phosphate)lysine modification.

Belongs to the GcvP family. As to quaternary structure, the glycine cleavage system is composed of four proteins: P, T, L and H. Pyridoxal 5'-phosphate is required as a cofactor.

The enzyme catalyses N(6)-[(R)-lipoyl]-L-lysyl-[glycine-cleavage complex H protein] + glycine + H(+) = N(6)-[(R)-S(8)-aminomethyldihydrolipoyl]-L-lysyl-[glycine-cleavage complex H protein] + CO2. In terms of biological role, the glycine cleavage system catalyzes the degradation of glycine. The P protein binds the alpha-amino group of glycine through its pyridoxal phosphate cofactor; CO(2) is released and the remaining methylamine moiety is then transferred to the lipoamide cofactor of the H protein. This is Glycine dehydrogenase (decarboxylating) from Saccharophagus degradans (strain 2-40 / ATCC 43961 / DSM 17024).